The primary structure comprises 117 residues: Large ribosomal subunit protein bL20 (117 aa).

The protein belongs to the bacterial ribosomal protein bL20 family.

Its function is as follows. Binds directly to 23S ribosomal RNA and is necessary for the in vitro assembly process of the 50S ribosomal subunit. It is not involved in the protein synthesizing functions of that subunit. The polypeptide is Large ribosomal subunit protein bL20 (Citrifermentans bemidjiense (strain ATCC BAA-1014 / DSM 16622 / JCM 12645 / Bem) (Geobacter bemidjiensis)).